The following is a 57-amino-acid chain: Putative secreted protein ML2569.1 (57 aa).

The signal sequence occupies residues 1-32; that stretch reads MSRIVAPAAASVVVGLLLGAATIFGMTLMVQQ. A disordered region spans residues 34 to 57; it reads TKPPLPGGDPQSSVLNRVEYGNRT.

The protein is Putative secreted protein ML2569.1 of Mycobacterium leprae (strain TN).